The chain runs to 600 residues: MTALSNIRNFSIIAHIDHGKSTLADRFIQTCGALQDREMQAQVLDSMDIERERGITIKAQSVTLYYDHPNGERYQLNFIDTPGHVDFSYEVSRSLAACEGALLVVDAAQGVEAQSVANCYTAVDLGLEVLPVLNKIDLPQVEPERVIQEIEDIIGIEADDAPRVSAKSGLGVDELLEALVERIPAPTGDRDAPLQALIIDSWFDNYLGVVSLVRVRQGSLSKGDKILIKSTMDSHLVTSIGVFTPKPLETGKLEAGEVGFVIAGIKDIHGAPVGDTMTHAKTPDVDLIPGFKQITPQVYAGLFPVDSSDFEKFREALQKLQINDSALFFEPDTSDALGFGFRCGFLGMLHMEIIQERLEREYNLDLITTAPSVIYEIKKKNGEILLIDNPSRLPDPGFVEEFREPIARCHILVPQDYLGNVMTLCMERRGTQVDMRFMGKQVQLIFDIPLGEVVMDFFDRLKSVSRGFASLDYEFDRYEVDKLVKVDVLINGDKVDALAMICHQEQARYRGGQLVEKMKELIPRQMFDVAIQAAIGSQIIARSTVKAMRKDVLAKCYGGDVSRKKKLLSKQKEGKKRMKQVGSVEIPQEAFLAVLQVDNQ.

Residues 5 to 187 (SNIRNFSIIA…ALVERIPAPT (183 aa)) enclose the tr-type G domain. GTP is bound by residues 17 to 22 (DHGKST) and 134 to 137 (NKID).

It belongs to the TRAFAC class translation factor GTPase superfamily. Classic translation factor GTPase family. LepA subfamily.

It localises to the cell inner membrane. It catalyses the reaction GTP + H2O = GDP + phosphate + H(+). Required for accurate and efficient protein synthesis under certain stress conditions. May act as a fidelity factor of the translation reaction, by catalyzing a one-codon backward translocation of tRNAs on improperly translocated ribosomes. Back-translocation proceeds from a post-translocation (POST) complex to a pre-translocation (PRE) complex, thus giving elongation factor G a second chance to translocate the tRNAs correctly. Binds to ribosomes in a GTP-dependent manner. The sequence is that of Elongation factor 4 from Psychrobacter sp. (strain PRwf-1).